A 171-amino-acid polypeptide reads, in one-letter code: UPF0316 protein EAT1b_0871 (171 aa).

Transmembrane regions (helical) follow at residues 4 to 24 (ILLI…RTIM), 32 to 52 (IAGL…GIVF), and 57 to 77 (TVGM…GGFV).

Belongs to the UPF0316 family.

It localises to the cell membrane. The polypeptide is UPF0316 protein EAT1b_0871 (Exiguobacterium sp. (strain ATCC BAA-1283 / AT1b)).